The chain runs to 684 residues: MVIKYLLLILVQSFVAFALPFTSRSDPKAEYLVTSLPGLYSNIRTDERPLMFAGQLELYPENQTHYFFWKYQDTNQIPEAKKRTIFWLNGGPGCSSMDGALMEAGPFRINKEGEVIYNEGSWHKSGDMVFVDQPAGTGFSYSDDYDHDLDQITVEFVRFMEKFFELFPEDASNEIYFAGESYAGQYIPYIADGILRRNKNLREGEKPFNLKGLMIGNGWIAPNEQSLSYLPYSVQAGIIKTNNPRWSSILRQHQECQDIVSENDGPDGSDVSQVVSNTCERVLNLILEATRDQSAADNEQCVNMYDHTLRDSYPSCGMNWPPDLANVTPFLREQSVMNDLNLINHKKWSECSGKVGNSFRAKNSKPAIHLFPSILEEIPIMLFNGNRDIICNYIGIEGFIKKLTWNGQTGFSEDLDTLDWVYDNKTAGYIQSERNLTVVNVFDASHMVPFDKPEISRSLIDIITGNFDEKEVDNKSDMKKKSIVTYPLGVRMAKQKEESESKTSPTSVTQSKTSSISAVSGKSLATSTTLDQEHSATPSAEAERAKNQQTSNRITRLIQLLVIVVLIWGVYILYSSYRSRPSSIIKTGPSGKKKNVQWADQLRQFEEEEIEQNEQGILSRALNKLKGGDSRGTYAPTSGKTYEDIEMNEGITEHTDNRVDDFIIESDEEDAHDENQTNKQSVSK.

The first 18 residues, 1–18, serve as a signal peptide directing secretion; that stretch reads MVIKYLLLILVQSFVAFA. Residues 19 to 556 lie on the Lumenal side of the membrane; sequence LPFTSRSDPK…NQQTSNRITR (538 aa). Asn62 carries an N-linked (GlcNAc...) asparagine glycan. Active-site residues include Ser181 and Asp388. N-linked (GlcNAc...) asparagine glycans are attached at residues Asn424 and Asn435. His446 is an active-site residue. A glycan (N-linked (GlcNAc...) asparagine) is linked at Asn474. The tract at residues 494–549 is disordered; sequence KQKEESESKTSPTSVTQSKTSSISAVSGKSLATSTTLDQEHSATPSAEAERAKNQQ. The segment covering 510–538 has biased composition (polar residues); the sequence is QSKTSSISAVSGKSLATSTTLDQEHSATP. The helical transmembrane segment at 557–577 threads the bilayer; it reads LIQLLVIVVLIWGVYILYSSY. Residues 578 to 684 are Cytoplasmic-facing; that stretch reads RSRPSSIIKT…NQTNKQSVSK (107 aa). The interval 647 to 684 is disordered; sequence MNEGITEHTDNRVDDFIIESDEEDAHDENQTNKQSVSK. Positions 651 to 661 are enriched in basic and acidic residues; that stretch reads ITEHTDNRVDD. Residues 662–672 show a composition bias toward acidic residues; sequence FIIESDEEDAH.

Belongs to the peptidase S10 family.

The protein resides in the golgi apparatus. It is found in the trans-Golgi network membrane. It catalyses the reaction Preferential release of a C-terminal arginine or lysine residue.. Its function is as follows. Protease with a carboxypeptidase B-like function involved in the C-terminal processing of the lysine and arginine residues from protein precursors. Promotes cell fusion and is involved in the programmed cell death. This Debaryomyces hansenii (strain ATCC 36239 / CBS 767 / BCRC 21394 / JCM 1990 / NBRC 0083 / IGC 2968) (Yeast) protein is Pheromone-processing carboxypeptidase KEX1 (KEX1).